The primary structure comprises 214 residues: Putative AgrB-like protein (214 aa).

Helical transmembrane passes span 41–61 (IISV…LIFL), 82–102 (CTLL…SSFF), 109–129 (IIVF…FKFA), 154–174 (ILTI…NLGW), and 182–202 (LSII…GNIL).

This sequence belongs to the AgrB family.

The protein localises to the cell membrane. In terms of biological role, may be involved in the proteolytic processing of a quorum sensing system signal molecule precursor. In Clostridium perfringens (strain SM101 / Type A), this protein is Putative AgrB-like protein.